We begin with the raw amino-acid sequence, 416 residues long: Glutamyl-tRNA reductase (416 aa).

Substrate-binding positions include 51–54 (TCNR), serine 110, 115–117 (EPQ), and glutamine 121. Cysteine 52 functions as the Nucleophile in the catalytic mechanism. Residue 190–195 (GAGQTG) participates in NADP(+) binding.

The protein belongs to the glutamyl-tRNA reductase family. As to quaternary structure, homodimer.

The enzyme catalyses (S)-4-amino-5-oxopentanoate + tRNA(Glu) + NADP(+) = L-glutamyl-tRNA(Glu) + NADPH + H(+). It participates in porphyrin-containing compound metabolism; protoporphyrin-IX biosynthesis; 5-aminolevulinate from L-glutamyl-tRNA(Glu): step 1/2. In terms of biological role, catalyzes the NADPH-dependent reduction of glutamyl-tRNA(Glu) to glutamate 1-semialdehyde (GSA). The chain is Glutamyl-tRNA reductase from Francisella tularensis subsp. tularensis (strain FSC 198).